The primary structure comprises 150 residues: D-aminoacyl-tRNA deacylase (150 aa).

A Gly-cisPro motif, important for rejection of L-amino acids motif is present at residues 137–138 (GP).

The protein belongs to the DTD family. In terms of assembly, homodimer.

Its subcellular location is the cytoplasm. It catalyses the reaction glycyl-tRNA(Ala) + H2O = tRNA(Ala) + glycine + H(+). The catalysed reaction is a D-aminoacyl-tRNA + H2O = a tRNA + a D-alpha-amino acid + H(+). Functionally, an aminoacyl-tRNA editing enzyme that deacylates mischarged D-aminoacyl-tRNAs. Also deacylates mischarged glycyl-tRNA(Ala), protecting cells against glycine mischarging by AlaRS. Acts via tRNA-based rather than protein-based catalysis; rejects L-amino acids rather than detecting D-amino acids in the active site. By recycling D-aminoacyl-tRNA to D-amino acids and free tRNA molecules, this enzyme counteracts the toxicity associated with the formation of D-aminoacyl-tRNA entities in vivo and helps enforce protein L-homochirality. This chain is D-aminoacyl-tRNA deacylase, found in Heliobacterium modesticaldum (strain ATCC 51547 / Ice1).